The chain runs to 161 residues: ATP synthase subunit b (161 aa).

The helical transmembrane segment at 12 to 32 (IAFFLFVFFCMKYIWPNLISL) threads the bilayer.

The protein belongs to the ATPase B chain family. In terms of assembly, F-type ATPases have 2 components, F(1) - the catalytic core - and F(0) - the membrane proton channel. F(1) has five subunits: alpha(3), beta(3), gamma(1), delta(1), epsilon(1). F(0) has three main subunits: a(1), b(2) and c(10-14). The alpha and beta chains form an alternating ring which encloses part of the gamma chain. F(1) is attached to F(0) by a central stalk formed by the gamma and epsilon chains, while a peripheral stalk is formed by the delta and b chains.

Its subcellular location is the cell membrane. In terms of biological role, f(1)F(0) ATP synthase produces ATP from ADP in the presence of a proton or sodium gradient. F-type ATPases consist of two structural domains, F(1) containing the extramembraneous catalytic core and F(0) containing the membrane proton channel, linked together by a central stalk and a peripheral stalk. During catalysis, ATP synthesis in the catalytic domain of F(1) is coupled via a rotary mechanism of the central stalk subunits to proton translocation. Component of the F(0) channel, it forms part of the peripheral stalk, linking F(1) to F(0). This Wigglesworthia glossinidia brevipalpis protein is ATP synthase subunit b.